The primary structure comprises 798 residues: Protocadherin beta-13 (798 aa).

The first 28 residues, 1–28 (MEASGKLICRQRQVLFSFLLLGLSLAGA), serve as a signal peptide directing secretion. The Extracellular segment spans residues 29-690 (AEPRSYSVVE…AQADLLTVYL (662 aa)). Cadherin domains are found at residues 36 to 134 (VVEE…SPVF), 139 to 243 (MLVK…APEF), 248 to 348 (YRVQ…APEV), 353 to 451 (FTSP…APAF), and 456 to 561 (YTLF…SPFV). N-linked (GlcNAc...) asparagine glycans are attached at residues Asn418 and Asn436. The N-linked (GlcNAc...) asparagine glycan is linked to Asn567. The Cadherin 6 domain maps to 568-671 (GSAPCTELVP…LVDGFSQPYL (104 aa)). The helical transmembrane segment at 691-711 (VVALASVSSLFLFSVLLFVAV) threads the bilayer. Residues 712-798 (RLCRRSRAAS…FPNNFGFNIQ (87 aa)) lie on the Cytoplasmic side of the membrane.

The protein resides in the cell membrane. Functionally, potential calcium-dependent cell-adhesion protein. May be involved in the establishment and maintenance of specific neuronal connections in the brain. The sequence is that of Protocadherin beta-13 (PCDHB13) from Homo sapiens (Human).